We begin with the raw amino-acid sequence, 229 residues long: Large ribosomal subunit protein uL1 (229 aa).

It belongs to the universal ribosomal protein uL1 family. Part of the 50S ribosomal subunit.

Binds directly to 23S rRNA. The L1 stalk is quite mobile in the ribosome, and is involved in E site tRNA release. Functionally, protein L1 is also a translational repressor protein, it controls the translation of the L11 operon by binding to its mRNA. The polypeptide is Large ribosomal subunit protein uL1 (Ureaplasma urealyticum serovar 10 (strain ATCC 33699 / Western)).